The following is a 277-amino-acid chain: 4-hydroxy-tetrahydrodipicolinate reductase (277 aa).

An NAD(+)-binding site is contributed by 9–14 (GATGRM). An NADP(+)-binding site is contributed by lysine 37. Residue 75-77 (GTS) participates in NAD(+) binding. Residue histidine 132 is the Proton donor/acceptor of the active site. Lysine 136 functions as the Proton donor in the catalytic mechanism. 142–143 (GT) is a (S)-2,3,4,5-tetrahydrodipicolinate binding site. Disordered regions lie at residues 154-173 (ARGA…ARGQ) and 247-277 (ERAA…VTSA). Positions 250–265 (AQAAAGDAPSGPVDDG) are enriched in low complexity.

The protein belongs to the DapB family.

It is found in the cytoplasm. The catalysed reaction is (S)-2,3,4,5-tetrahydrodipicolinate + NAD(+) + H2O = (2S,4S)-4-hydroxy-2,3,4,5-tetrahydrodipicolinate + NADH + H(+). It carries out the reaction (S)-2,3,4,5-tetrahydrodipicolinate + NADP(+) + H2O = (2S,4S)-4-hydroxy-2,3,4,5-tetrahydrodipicolinate + NADPH + H(+). It participates in amino-acid biosynthesis; L-lysine biosynthesis via DAP pathway; (S)-tetrahydrodipicolinate from L-aspartate: step 4/4. Its function is as follows. Catalyzes the conversion of 4-hydroxy-tetrahydrodipicolinate (HTPA) to tetrahydrodipicolinate. In Clavibacter michiganensis subsp. michiganensis (strain NCPPB 382), this protein is 4-hydroxy-tetrahydrodipicolinate reductase.